Consider the following 391-residue polypeptide: Putative 12-oxophytodienoate reductase 6 (391 aa).

Residues 42–44 (PMT), Ala-75, and Gln-117 each bind FMN. Residue 189–192 (HGAN) coordinates substrate. The Proton donor role is filled by Tyr-194. Position 241 (Arg-241) interacts with FMN. Arg-282 is a binding site for substrate. FMN-binding positions include Gly-312 and 333–334 (GR). Residues 372–391 (YPFLDEHHHDDDDDSNAPSA) are disordered. The span at 382–391 (DDDDSNAPSA) shows a compositional bias: acidic residues.

Belongs to the NADH:flavin oxidoreductase/NADH oxidase family. FMN is required as a cofactor.

Putative oxophytodienoate reductase that may be involved in the biosynthesis or metabolism of oxylipin signaling molecules. This is Putative 12-oxophytodienoate reductase 6 (OPR6) from Oryza sativa subsp. japonica (Rice).